The primary structure comprises 304 residues: MTDVAEEAGWATAKTLAEALPYIQIYDRETVVIKYGGHAMGQEDVAKVFAADAVLLKLLGVHPVVVHGGGPQISRMLDKAGVKSTFVDGLRVTDEATMEVAEMVLSGAINKEIANWITLAGAEADVRGVGLSGKDARLITAEKVTRTKKDPDSNIEQAVDLGFVGEPTKVDPQLIEALLTSEHDYIPVVAPIGVSPDGDTFNINADTVAGALAGALKAKRMLMLTDIKGVLDGNGELIREMTIEQARALIDTGVATGGMIPKLENAIHAIESGVEAVVILDGRRPHAMLVELFSEYGAGTLIKR.

Substrate-binding positions include 69 to 70 (GG), Arg91, and Asn202.

The protein belongs to the acetylglutamate kinase family. ArgB subfamily.

The protein localises to the cytoplasm. The enzyme catalyses N-acetyl-L-glutamate + ATP = N-acetyl-L-glutamyl 5-phosphate + ADP. It participates in amino-acid biosynthesis; L-arginine biosynthesis; N(2)-acetyl-L-ornithine from L-glutamate: step 2/4. Catalyzes the ATP-dependent phosphorylation of N-acetyl-L-glutamate. The sequence is that of Acetylglutamate kinase from Caulobacter vibrioides (strain ATCC 19089 / CIP 103742 / CB 15) (Caulobacter crescentus).